A 101-amino-acid chain; its full sequence is Small ribosomal subunit protein cS23 (101 aa).

This sequence belongs to the chloroplast-specific ribosomal protein cS23 family. In terms of assembly, part of the 30S ribosomal subunit.

It is found in the plastid. The protein resides in the chloroplast. Its function is as follows. Probably a ribosomal protein or a ribosome-associated protein. This is Small ribosomal subunit protein cS23 (ycf65) from Cyanidium caldarium (Red alga).